The sequence spans 316 residues: Aspartate carbamoyltransferase catalytic subunit (316 aa).

Arg-58 and Thr-59 together coordinate carbamoyl phosphate. Residue Lys-86 coordinates L-aspartate. Arg-108, His-136, and Gln-139 together coordinate carbamoyl phosphate. Arg-169 and Arg-223 together coordinate L-aspartate. Residues Gly-264 and Pro-265 each contribute to the carbamoyl phosphate site.

It belongs to the aspartate/ornithine carbamoyltransferase superfamily. ATCase family. In terms of assembly, heterododecamer (2C3:3R2) of six catalytic PyrB chains organized as two trimers (C3), and six regulatory PyrI chains organized as three dimers (R2).

It catalyses the reaction carbamoyl phosphate + L-aspartate = N-carbamoyl-L-aspartate + phosphate + H(+). The protein operates within pyrimidine metabolism; UMP biosynthesis via de novo pathway; (S)-dihydroorotate from bicarbonate: step 2/3. Its function is as follows. Catalyzes the condensation of carbamoyl phosphate and aspartate to form carbamoyl aspartate and inorganic phosphate, the committed step in the de novo pyrimidine nucleotide biosynthesis pathway. The protein is Aspartate carbamoyltransferase catalytic subunit of Dinoroseobacter shibae (strain DSM 16493 / NCIMB 14021 / DFL 12).